The following is a 221-amino-acid chain: Translation initiation factor 6 (221 aa).

This sequence belongs to the eIF-6 family.

In terms of biological role, binds to the 50S ribosomal subunit and prevents its association with the 30S ribosomal subunit to form the 70S initiation complex. The chain is Translation initiation factor 6 from Methanospirillum hungatei JF-1 (strain ATCC 27890 / DSM 864 / NBRC 100397 / JF-1).